The chain runs to 294 residues: Coiled-coil domain-containing protein 69 (294 aa).

The segment at 1-43 (MGCGHSRLSCCKPPKKRRQRPDQPPKPEPQELGPLNGDTATTD) is disordered. G2 is lipidated: N-myristoyl glycine. The span at 20–29 (RPDQPPKPEP) shows a compositional bias: basic and acidic residues. A coiled-coil region spans residues 47 to 270 (ASEEAEQHQK…QEKEELLYRV (224 aa)). S152 and S239 each carry phosphoserine.

This sequence belongs to the CCDC69 family.

The protein resides in the cytoplasm. Its subcellular location is the cytoskeleton. It is found in the spindle. The protein localises to the midbody. May act as a scaffold to regulate the recruitment and assembly of spindle midzone components. Required for the localization of AURKB and PLK1 to the spindle midzone. This is Coiled-coil domain-containing protein 69 (CCDC69) from Bos taurus (Bovine).